The following is a 161-amino-acid chain: Phosphopantetheine adenylyltransferase (161 aa).

Substrate is bound at residue S9. Residues 9-10 (SF) and H17 contribute to the ATP site. Positions 41, 73, and 87 each coordinate substrate. Residues 88-90 (GLR), E98, and 123-129 (FAHISST) contribute to the ATP site.

The protein belongs to the bacterial CoaD family. Homohexamer. It depends on Mg(2+) as a cofactor.

Its subcellular location is the cytoplasm. It carries out the reaction (R)-4'-phosphopantetheine + ATP + H(+) = 3'-dephospho-CoA + diphosphate. Its pathway is cofactor biosynthesis; coenzyme A biosynthesis; CoA from (R)-pantothenate: step 4/5. In terms of biological role, reversibly transfers an adenylyl group from ATP to 4'-phosphopantetheine, yielding dephospho-CoA (dPCoA) and pyrophosphate. The polypeptide is Phosphopantetheine adenylyltransferase (Chloroflexus aurantiacus (strain ATCC 29366 / DSM 635 / J-10-fl)).